The sequence spans 500 residues: Melanopsin (500 aa).

Residues 1–65 (MSHHSSWRGH…TVDVPDHAHY (65 aa)) lie on the Extracellular side of the membrane. Asn18 carries N-linked (GlcNAc...) asparagine glycosylation. Residues 66–86 (IIGAVILIVGITGVIGNALVI) form a helical membrane-spanning segment. Residues 87-101 (YVFCRSRTLRTAGNM) are Cytoplasmic-facing. The helical transmembrane segment at 102 to 122 (FVVNLAVADFFMSLTQSPVFF) threads the bilayer. At 123–138 (AASLHRRWIFGERICE) the chain is on the extracellular side. A disulfide bridge links Cys137 with Cys215. Residues 139–159 (LYAFCGALFGICSMMTLTAIA) traverse the membrane as a helical segment. The Cytoplasmic portion of the chain corresponds to 160–182 (ADRCLAITQPLALVGNVSRRKAG). A helical membrane pass occupies residues 183–203 (AVLAVVWLYSLGWSLPPFFGW). The Extracellular segment spans residues 204–232 (SAYVPEGLQTSCSWDYMTFTPSVRAYTIL). The helical transmembrane segment at 233-253 (LFIFVFFIPLGIIVSCYVGIF) threads the bilayer. Residues 254–286 (QAIRAMGKEIRELDCGETQKVYERMQNEWKMAK) are Cytoplasmic-facing. Residues 287 to 307 (IALLVILLFVISWSPYSVVAL) traverse the membrane as a helical segment. The Extracellular segment spans residues 308 to 322 (TATAGYSHLLTPYMN). The helical transmembrane segment at 323-343 (SVPAVIAKASAIHNPIIYAIT) threads the bilayer. The residue at position 330 (Lys330) is an N6-(retinylidene)lysine. The Cytoplasmic portion of the chain corresponds to 344–500 (HPKYRAAIAR…DGKALLLGGN (157 aa)). 3 disordered regions span residues 406–428 (GKKR…ADGS), 448–470 (VILS…AHKV), and 481–500 (ETDS…LGGN). Composition is skewed to polar residues over residues 411–428 (SSAS…ADGS) and 448–462 (VILS…ASGQ).

The protein belongs to the G-protein coupled receptor 1 family. Opsin subfamily. In terms of tissue distribution, expressed in a subset of retinal horizontal cells as well as in retinal ganglion cells.

It localises to the cell membrane. Functionally, photoreceptor implicated in non-image-forming responses to light. The protein is Melanopsin (opn4) of Rutilus rutilus (Roach).